The primary structure comprises 71 residues: Translation initiation factor IF-1 (71 aa).

The S1-like domain maps to 1 to 71 (MAKQAAIEQD…LTKARITYRY (71 aa)).

It belongs to the IF-1 family. As to quaternary structure, component of the 30S ribosomal translation pre-initiation complex which assembles on the 30S ribosome in the order IF-2 and IF-3, IF-1 and N-formylmethionyl-tRNA(fMet); mRNA recruitment can occur at any time during PIC assembly.

The protein resides in the cytoplasm. In terms of biological role, one of the essential components for the initiation of protein synthesis. Stabilizes the binding of IF-2 and IF-3 on the 30S subunit to which N-formylmethionyl-tRNA(fMet) subsequently binds. Helps modulate mRNA selection, yielding the 30S pre-initiation complex (PIC). Upon addition of the 50S ribosomal subunit IF-1, IF-2 and IF-3 are released leaving the mature 70S translation initiation complex. This chain is Translation initiation factor IF-1, found in Christiangramia forsetii (strain DSM 17595 / CGMCC 1.15422 / KT0803) (Gramella forsetii).